The sequence spans 100 residues: Urease subunit gamma (100 aa).

This sequence belongs to the urease gamma subunit family. In terms of assembly, heterotrimer of UreA (gamma), UreB (beta) and UreC (alpha) subunits. Three heterotrimers associate to form the active enzyme.

It is found in the cytoplasm. It catalyses the reaction urea + 2 H2O + H(+) = hydrogencarbonate + 2 NH4(+). The protein operates within nitrogen metabolism; urea degradation; CO(2) and NH(3) from urea (urease route): step 1/1. The chain is Urease subunit gamma from Marinobacter nauticus (strain ATCC 700491 / DSM 11845 / VT8) (Marinobacter aquaeolei).